A 124-amino-acid chain; its full sequence is Large ribosomal subunit protein eL31 (124 aa).

Tyrosine 102 is subject to Phosphotyrosine.

It belongs to the eukaryotic ribosomal protein eL31 family.

The sequence is that of Large ribosomal subunit protein eL31 (RpL31) from Drosophila melanogaster (Fruit fly).